We begin with the raw amino-acid sequence, 237 residues long: Phosphoribosylaminoimidazole-succinocarboxamide synthase (237 aa).

The protein belongs to the SAICAR synthetase family.

The enzyme catalyses 5-amino-1-(5-phospho-D-ribosyl)imidazole-4-carboxylate + L-aspartate + ATP = (2S)-2-[5-amino-1-(5-phospho-beta-D-ribosyl)imidazole-4-carboxamido]succinate + ADP + phosphate + 2 H(+). It participates in purine metabolism; IMP biosynthesis via de novo pathway; 5-amino-1-(5-phospho-D-ribosyl)imidazole-4-carboxamide from 5-amino-1-(5-phospho-D-ribosyl)imidazole-4-carboxylate: step 1/2. This Shigella dysenteriae serotype 1 (strain Sd197) protein is Phosphoribosylaminoimidazole-succinocarboxamide synthase.